The chain runs to 567 residues: Potassium-transporting ATPase potassium-binding subunit (567 aa).

Helical transmembrane passes span 3-23 (MIGWLQIILFCVIIVALTKPL), 64-84 (LTYTVAMLLFHVGGFLVIYGV), 136-156 (GLTHQNFLSAATGIALAMALI), 179-199 (LYVLLPICVVYTLFLVWQGIP), 220-240 (VGPVASQVAIKMLGTNGGGFF), 254-274 (LSNFVQMLSIFALGAALTNVF), 285-305 (WAILAVMGVLFVAGVAVTYWA), 330-350 (FGLVASSLFAVITTAASCGAV), 374-394 (IIVGGVGAGLYGMLLFVVLAI), 420-440 (AMLAILVLPLMYLGWTAVGVV), 488-508 (LASAMFVGRFFMIVPAMAIAG), and 527-547 (GGLFVGLVVGVILIIGGLTFF).

Belongs to the KdpA family. In terms of assembly, the system is composed of three essential subunits: KdpA, KdpB and KdpC.

The protein resides in the cell inner membrane. In terms of biological role, part of the high-affinity ATP-driven potassium transport (or Kdp) system, which catalyzes the hydrolysis of ATP coupled with the electrogenic transport of potassium into the cytoplasm. This subunit binds the periplasmic potassium ions and delivers the ions to the membrane domain of KdpB through an intramembrane tunnel. The sequence is that of Potassium-transporting ATPase potassium-binding subunit from Bradyrhizobium diazoefficiens (strain JCM 10833 / BCRC 13528 / IAM 13628 / NBRC 14792 / USDA 110).